Reading from the N-terminus, the 202-residue chain is MSGLSEKEVFLLLSSLQCTHGFLGTFDCRFPGFINKVKVQTAIINTGPREQGGIHWIALAWDPKSYQMFIFDPLGWKNDQLMKYYKFSYSNLIKRSALSSPDKCVKVIKNSQSVQCTCAGSCGLFCVFFLYCFYKYKSNAFKNCLFQSLYGSIPSLTPPNPTNLHKNQDFLYKFFKEKSLYFRQNEEYIVSNTKIGLIKSHI.

Catalysis depends on residues His-55, Asp-72, and Cys-122.

This sequence belongs to the peptidase C5 family. As to quaternary structure, interacts with protease cofactor pVI-C; this interaction is necessary for protease activation.

It localises to the virion. The protein localises to the host nucleus. It carries out the reaction Cleaves proteins of the adenovirus and its host cell at two consensus sites: -Yaa-Xaa-Gly-Gly-|-Xaa- and -Yaa-Xaa-Gly-Xaa-|-Gly- (in which Yaa is Met, Ile or Leu, and Xaa is any amino acid).. Requires DNA and protease cofactor for maximal activation. Inside nascent virions, becomes partially activated by binding to the viral DNA, allowing it to cleave the cofactor that binds to the protease and fully activates it. Actin, like the viral protease cofactor, seems to act as a cofactor in the cleavage of cytokeratin 18 and of actin itself. Cleaves viral precursor proteins (pTP, pIIIa, pVI, pVII, pVIII, and pX) inside newly assembled particles giving rise to mature virions. Protease complexed to its cofactor slides along the viral DNA to specifically locate and cleave the viral precursors. Mature virions have a weakened organization compared to the unmature virions, thereby facilitating subsequent uncoating. Without maturation, the particle lacks infectivity and is unable to uncoat. Late in adenovirus infection, in the cytoplasm, may participate in the cytoskeleton destruction. Cleaves host cell cytoskeletal keratins K7 and K18. The chain is Protease from Bovine adenovirus 7 (BAdV-7).